A 934-amino-acid polypeptide reads, in one-letter code: Serine/threonine-protein kinase PknD (934 aa).

The Protein kinase domain occupies 4 to 296 (YELIRLIGRG…ELRKALQPHL (293 aa)). ATP-binding positions include 10-18 (IGRGGMGEV) and Lys-33. The active-site Proton acceptor is Asp-138.

It belongs to the protein kinase superfamily. Ser/Thr protein kinase family. Post-translationally, autophosphorylated on serine and threonine residues.

The catalysed reaction is L-seryl-[protein] + ATP = O-phospho-L-seryl-[protein] + ADP + H(+). It carries out the reaction L-threonyl-[protein] + ATP = O-phospho-L-threonyl-[protein] + ADP + H(+). Functionally, together with the serine/threonine kinase Pkn1, may play a role in the specific interactions with host proteins during intracellular growth. In Chlamydia muridarum (strain MoPn / Nigg), this protein is Serine/threonine-protein kinase PknD.